A 126-amino-acid polypeptide reads, in one-letter code: DNA-directed RNA polymerase subunit omega (126 aa).

The protein belongs to the RNA polymerase subunit omega family. The RNAP catalytic core consists of 2 alpha, 1 beta, 1 beta' and 1 omega subunit. When a sigma factor is associated with the core the holoenzyme is formed, which can initiate transcription.

It catalyses the reaction RNA(n) + a ribonucleoside 5'-triphosphate = RNA(n+1) + diphosphate. Functionally, promotes RNA polymerase assembly. Latches the N- and C-terminal regions of the beta' subunit thereby facilitating its interaction with the beta and alpha subunits. This chain is DNA-directed RNA polymerase subunit omega, found in Paramagnetospirillum magneticum (strain ATCC 700264 / AMB-1) (Magnetospirillum magneticum).